A 209-amino-acid polypeptide reads, in one-letter code: MTIGVVGRKCGMTRIFTEEGVSIPVTVIEIEPNRVTQFKNEESDGYRAVQVTVGERRASRVSKAQAGHFAKANVAAGRTVMEFRLEEGDYQAGDLINAEIFQAGQLVDVTGQSKGKGFAGTIKRWNFRGQDNTHGNSVSHRVPGSIGQCQTPGRVFKGKKMSGHMGAERVTVQSLEVVRVDAERNLLLVKGAVPGATGGDVIVRPAVKA.

N5-methylglutamine is present on Gln150.

It belongs to the universal ribosomal protein uL3 family. In terms of assembly, part of the 50S ribosomal subunit. Forms a cluster with proteins L14 and L19. Post-translationally, methylated by PrmB.

Its function is as follows. One of the primary rRNA binding proteins, it binds directly near the 3'-end of the 23S rRNA, where it nucleates assembly of the 50S subunit. The sequence is that of Large ribosomal subunit protein uL3 from Ectopseudomonas mendocina (strain ymp) (Pseudomonas mendocina).